The primary structure comprises 704 residues: Ubiquitin-like modifier-activating enzyme atg7 (704 aa).

A GXGXXG motif motif is present at residues 372–377 (GAGTLG). The active-site Glycyl thioester intermediate is the C555. A homodimerization region spans residues 660-699 (ALTEKDYITELSGLAEVQRKAEAAANDVEWDSDEEGMEDE). The segment at 682 to 704 (AAANDVEWDSDEEGMEDEEPELL) is disordered. A compositionally biased stretch (acidic residues) spans 687-704 (VEWDSDEEGMEDEEPELL).

This sequence belongs to the ATG7 family. In terms of assembly, homodimer. Interacts with ATG8 through a thioester bond between Cys-555 and the C-terminal Gly of ATG8 and with ATG12 through a thioester bond between Cys-555 and the C-terminal Gly of ATG12. Also interacts with ATG3.

Its subcellular location is the cytoplasm. The protein resides in the preautophagosomal structure. In terms of biological role, E1-like activating enzyme involved in the 2 ubiquitin-like systems required for cytoplasm to vacuole transport (Cvt) and autophagy. Activates ATG12 for its conjugation with ATG5 and ATG8 for its conjugation with phosphatidylethanolamine. Both systems are needed for the ATG8 association to Cvt vesicles and autophagosomes membranes. Autophagy is essential for maintenance of amino acid levels and protein synthesis under nitrogen starvation. Required for selective autophagic degradation of the nucleus (nucleophagy) as well as for mitophagy which contributes to regulate mitochondrial quantity and quality by eliminating the mitochondria to a basal level to fulfill cellular energy requirements and preventing excess ROS production. Required for normal mycelial growth and conidiogenesis, and regulates sclerotial formation. Plays an essential role in pathogenesis. This chain is Ubiquitin-like modifier-activating enzyme atg7, found in Botryotinia fuckeliana (strain T4) (Noble rot fungus).